Consider the following 523-residue polypeptide: Chitinase Chi52 (523 aa).

An N-terminal signal peptide occupies residues 1 to 30; that stretch reads MNQAVRFRPVITFALAFLLLITWFAPRADA. Residues 80 to 101 form a disordered region; sequence GSGGETPTPDTAPPSVPAGLTS. One can recognise a Fibronectin type-III domain in the interval 95–180; sequence VPAGLTSSSI…TSLSVTTSNG (86 aa). The 324-residue stretch at 190–513 folds into the GH18 domain; it reads KWLIGYWHNF…SAHRPFLNGL (324 aa). Residue E302 is the Proton donor of the active site.

The protein belongs to the glycosyl hydrolase 18 family. Chitinase class II subfamily.

It catalyses the reaction Random endo-hydrolysis of N-acetyl-beta-D-glucosaminide (1-&gt;4)-beta-linkages in chitin and chitodextrins.. Activity is inhibited by Cu(2+) and Co(2+), and almost completely inhibited by SDS. Functionally, acidic chitinase that displays a broad substrate specificity, showing the highest specific activity toward colloidal chitin, followed by ethylene glycol chitin and ball milled chitin, but exhibits no activity toward powdery chitin and chitosan. Hydrolyzes colloidal chitin and chitooligosaccharides with degree of polymerization 2-5 to release mainly N-acetyl chitobiose. Displays inhibition effects on the growth of some phytopathogenic fungi, including Alternaria alstroemeriae, Botrytis cinerea, Rhizoctonia solani, Sclerotinia sclerotiorum and Valsa mali. This chain is Chitinase Chi52, found in Paenibacillus xylanexedens.